Here is a 299-residue protein sequence, read N- to C-terminus: MAQLIDGKKLAEDVVSTVKTETEKLVAATGVVPGIAVVIVGEDPASQVYVASKSRKAKECGFHSVQHDLPETASEQELLNLIEGLNNDPAIHGILVQLPLPGHIDSGRVIQTIAPEKDVDGFHFINVGKLGTGEVETAFVPCTPAGAMIMIERVHGRDLSGLNAVVIGRSNIVGKPMFNLLLAANATVTVAHSRTKDLPAIARNADILVAAVGRPQMVKGDWVKPGATVIDVGINRIPAPERGEGKTRLVGDVDFAEAEKVAGAITPVPGGVGPMTIAMLMANTLTAACRSAGMKKPVF.

Residues 168–170, Ser-193, and Ile-234 each bind NADP(+); that span reads GRS.

Belongs to the tetrahydrofolate dehydrogenase/cyclohydrolase family. Homodimer.

It carries out the reaction (6R)-5,10-methylene-5,6,7,8-tetrahydrofolate + NADP(+) = (6R)-5,10-methenyltetrahydrofolate + NADPH. It catalyses the reaction (6R)-5,10-methenyltetrahydrofolate + H2O = (6R)-10-formyltetrahydrofolate + H(+). It functions in the pathway one-carbon metabolism; tetrahydrofolate interconversion. Its function is as follows. Catalyzes the oxidation of 5,10-methylenetetrahydrofolate to 5,10-methenyltetrahydrofolate and then the hydrolysis of 5,10-methenyltetrahydrofolate to 10-formyltetrahydrofolate. The chain is Bifunctional protein FolD from Brucella abortus (strain S19).